The chain runs to 1150 residues: ATP-dependent helicase/deoxyribonuclease subunit B (1150 aa).

ATP is bound at residue 8–15 (GRAGSGKS). Residues C786, C1106, C1109, and C1115 each contribute to the [4Fe-4S] cluster site.

This sequence belongs to the helicase family. AddB/RexB type 1 subfamily. Heterodimer of AddA and AddB. The cofactor is Mg(2+). It depends on [4Fe-4S] cluster as a cofactor.

Its function is as follows. The heterodimer acts as both an ATP-dependent DNA helicase and an ATP-dependent, dual-direction single-stranded exonuclease. Recognizes the chi site generating a DNA molecule suitable for the initiation of homologous recombination. The AddB subunit has 5' -&gt; 3' nuclease activity but not helicase activity. The polypeptide is ATP-dependent helicase/deoxyribonuclease subunit B (Clostridium botulinum (strain Langeland / NCTC 10281 / Type F)).